Here is a 1247-residue protein sequence, read N- to C-terminus: Catenin delta-2 (1247 aa).

3 disordered regions span residues 1–50 (MFAR…TTSA), 134–238 (SGIL…SAFH), and 256–309 (LPAP…KSYS). The residue at position 7 (Ser-7) is a Phosphoserine. Residues 22 to 50 (PSASEKNSSLSPGLNTSNGDGSETETTSA) show a composition bias toward polar residues. A coiled-coil region spans residues 49–84 (SAILASVKEQELQFERLTRELEAERQIVASQLERCK). The segment covering 149–160 (SLLSQSALQLNS) has biased composition (low complexity). Positions 172–207 (YHSNQTLALGDTAPSQLPARSTQARAAGQSFSQGTT) are enriched in polar residues. Residue Arg-209 is modified to Omega-N-methylarginine. Positions 218 to 228 (PAPPPPPPREP) are enriched in pro residues. Arg-261 carries the post-translational modification Omega-N-methylarginine. A phosphoserine mark is found at Ser-264 and Ser-273. A compositionally biased stretch (polar residues) spans 265-276 (PLTTTQGGSPTK). Omega-N-methylarginine occurs at positions 279 and 293. The segment covering 296-309 (SPKQSPSRLAKSYS) has biased composition (polar residues). A phosphoserine mark is found at Ser-324, Ser-357, Ser-412, and Ser-458. The stretch at 391-433 (GSRASYSSQHGHLAPELRALQSPEHHIDPIYEDRVYQKPPMRS) is one ARM 1 repeat. Residues 429-480 (PPMRSLSQSQGDPLPPAHTGTFRTSTAPSSPGVDSVPLQRTGSQHGPQNAAA) are disordered. A compositionally biased stretch (polar residues) spans 466–475 (LQRTGSQHGP). Ser-511 is subject to Phosphoserine. The residue at position 513 (Tyr-513) is a Phosphotyrosine. The disordered stretch occupies residues 514-533 (SKSGPALPPEGTLARSPSID). ARM repeat units lie at residues 537-576 (KDPREFGWRDPELPEVIQMLQHQFPSVQSNAAAYLQHLCF), 579-618 (NKIKAEIRRQGGIQLLVDLLDHRMTEVHRSACGALRNLVY), 623-663 (DDNK…NLSS), 679-721 (LTNA…NVSS), 725-770 (EARR…NLSY), 832-872 (PKGI…NLAA), 904-943 (VYIRAAVRKEKGLPILVELLRIDNDRVVCAVATALRNMAL), and 997-1040 (MENA…SMWQ). Disordered regions lie at residues 1064–1131 (TIER…HTSR) and 1152–1176 (APAEDIKQNQVSTQPVPQEPSRKDY). The segment covering 1072–1081 (PYSSSRTPSI) has biased composition (polar residues). 2 positions are modified to phosphoserine: Ser-1087 and Ser-1098. Over residues 1087–1100 (SPNNRSASAPASPR) the composition is skewed to low complexity. Residues 1103-1112 (ISLKERKTDY) show a composition bias toward basic and acidic residues.

The protein belongs to the beta-catenin family. As to quaternary structure, binds to E-cadherin at a juxtamembrane site within the cytoplasmic domain. Binds to PSEN1. Interacts with PDZD2. Interacts (via the extreme C-terminus) with FRMPD2 (via the PDZ 2 domain). Interacts with ZBTB33. Interacts with ARHGEF28. Interacts with CDK5. Interacts with CTNNB1. Interacts with GSK3A and GSK3B. Interacts with DNM2. Interacts with CCDC85B. In terms of processing, O-glycosylated. Post-translationally, phosphorylated by CDK5. Phosphorylated by GSK3B. In terms of tissue distribution, expressed in neurons and glial cells. Isoform 2 was found to be the most predominant isoform in various brain regions. Expressed at neuromuscular junctions.

It localises to the nucleus. The protein resides in the cell junction. Its subcellular location is the adherens junction. The protein localises to the cell projection. It is found in the dendrite. It localises to the perikaryon. In terms of biological role, has a critical role in neuronal development, particularly in the formation and/or maintenance of dendritic spines and synapses. Involved in the regulation of canonical Wnt signaling. It probably acts on beta-catenin turnover, facilitating beta-catenin interaction with GSK3B, phosphorylation, ubiquitination and degradation. May be involved in neuronal cell adhesion and tissue morphogenesis and integrity by regulating adhesion molecules. Functions as a transcriptional activator when bound to ZBTB33. In Mus musculus (Mouse), this protein is Catenin delta-2 (Ctnnd2).